The following is a 916-amino-acid chain: DNA mismatch repair protein MutS (916 aa).

Residue 665–672 (GPNMAGKS) coordinates ATP.

It belongs to the DNA mismatch repair MutS family.

In terms of biological role, this protein is involved in the repair of mismatches in DNA. It is possible that it carries out the mismatch recognition step. This protein has a weak ATPase activity. The protein is DNA mismatch repair protein MutS of Bradyrhizobium sp. (strain ORS 278).